The following is a 151-amino-acid chain: Small ribosomal subunit protein uS13 (151 aa).

This sequence belongs to the universal ribosomal protein uS13 family. Part of the 30S ribosomal subunit. Forms a loose heterodimer with protein S19. Forms two bridges to the 50S subunit in the 70S ribosome.

Its function is as follows. Located at the top of the head of the 30S subunit, it contacts several helices of the 16S rRNA. In the 70S ribosome it contacts the 23S rRNA (bridge B1a) and protein L5 of the 50S subunit (bridge B1b), connecting the 2 subunits; these bridges are implicated in subunit movement. The sequence is that of Small ribosomal subunit protein uS13 from Methanospirillum hungatei JF-1 (strain ATCC 27890 / DSM 864 / NBRC 100397 / JF-1).